A 222-amino-acid chain; its full sequence is 2-C-methyl-D-erythritol 4-phosphate cytidylyltransferase (222 aa).

This sequence belongs to the IspD/TarI cytidylyltransferase family. IspD subfamily.

The catalysed reaction is 2-C-methyl-D-erythritol 4-phosphate + CTP + H(+) = 4-CDP-2-C-methyl-D-erythritol + diphosphate. Its pathway is isoprenoid biosynthesis; isopentenyl diphosphate biosynthesis via DXP pathway; isopentenyl diphosphate from 1-deoxy-D-xylulose 5-phosphate: step 2/6. Its function is as follows. Catalyzes the formation of 4-diphosphocytidyl-2-C-methyl-D-erythritol from CTP and 2-C-methyl-D-erythritol 4-phosphate (MEP). The protein is 2-C-methyl-D-erythritol 4-phosphate cytidylyltransferase of Azobacteroides pseudotrichonymphae genomovar. CFP2.